A 371-amino-acid chain; its full sequence is Probable beta-1,3-galactosyltransferase 12 (371 aa).

The segment at 1-36 (MPLFSHRFTTASSSSPASPSYYNKPSSKTHKPNSSS) is disordered. Over residues 11-36 (ASSSSPASPSYYNKPSSKTHKPNSSS) the composition is skewed to low complexity. Residues 46–66 (VAIIFFSLVSVFIGVAGTIFA) traverse the membrane as a helical; Signal-anchor for type II membrane protein segment. N291 carries N-linked (GlcNAc...) asparagine glycosylation.

This sequence belongs to the glycosyltransferase 31 family. It depends on Mn(2+) as a cofactor.

It is found in the golgi apparatus membrane. It functions in the pathway protein modification; protein glycosylation. In terms of biological role, beta-1,3-galactosyltransferase that transfers galactose from UDP-galactose to substrates with a terminal glycosyl residue. This Arabidopsis thaliana (Mouse-ear cress) protein is Probable beta-1,3-galactosyltransferase 12 (B3GALT12).